The chain runs to 195 residues: ATP-dependent Clp protease proteolytic subunit (195 aa).

Ser-97 functions as the Nucleophile in the catalytic mechanism. His-122 is an active-site residue.

Belongs to the peptidase S14 family. As to quaternary structure, fourteen ClpP subunits assemble into 2 heptameric rings which stack back to back to give a disk-like structure with a central cavity, resembling the structure of eukaryotic proteasomes.

Its subcellular location is the cytoplasm. The catalysed reaction is Hydrolysis of proteins to small peptides in the presence of ATP and magnesium. alpha-casein is the usual test substrate. In the absence of ATP, only oligopeptides shorter than five residues are hydrolyzed (such as succinyl-Leu-Tyr-|-NHMec, and Leu-Tyr-Leu-|-Tyr-Trp, in which cleavage of the -Tyr-|-Leu- and -Tyr-|-Trp bonds also occurs).. Functionally, cleaves peptides in various proteins in a process that requires ATP hydrolysis. Has a chymotrypsin-like activity. Plays a major role in the degradation of misfolded proteins. The polypeptide is ATP-dependent Clp protease proteolytic subunit (Campylobacter hominis (strain ATCC BAA-381 / DSM 21671 / CCUG 45161 / LMG 19568 / NCTC 13146 / CH001A)).